The sequence spans 450 residues: Protein phosphatase 1F (450 aa).

The 258-residue stretch at 152–409 (LVSIHAIRNT…DNITVMVVFL (258 aa)) folds into the PPM-type phosphatase domain. The Mn(2+) site is built by aspartate 194, glycine 195, aspartate 356, and aspartate 400. The tract at residues 420–450 (GQGAGGAQADVGSQDLSTGLSELEINTSQRS) is disordered. The span at 433–450 (QDLSTGLSELEINTSQRS) shows a compositional bias: polar residues. Residue serine 450 is modified to Phosphoserine.

The protein belongs to the PP2C family. As to quaternary structure, associates with FEM1B. The cofactor is Mg(2+). Mn(2+) serves as cofactor.

The catalysed reaction is O-phospho-L-seryl-[protein] + H2O = L-seryl-[protein] + phosphate. It carries out the reaction O-phospho-L-threonyl-[protein] + H2O = L-threonyl-[protein] + phosphate. Dephosphorylates and concomitantly deactivates CaM-kinase II activated upon autophosphorylation, and CaM-kinases IV and I activated upon phosphorylation by CaM-kinase kinase. Promotes apoptosis. The polypeptide is Protein phosphatase 1F (Ppm1f) (Rattus norvegicus (Rat)).